A 155-amino-acid chain; its full sequence is Small ribosomal subunit protein uS9 (155 aa).

Belongs to the universal ribosomal protein uS9 family.

The sequence is that of Small ribosomal subunit protein uS9 from Rhizobium etli (strain ATCC 51251 / DSM 11541 / JCM 21823 / NBRC 15573 / CFN 42).